A 255-amino-acid chain; its full sequence is GTP cyclohydrolase III (255 aa).

The protein belongs to the archaeal-type GTP cyclohydrolase family.

It catalyses the reaction GTP + 3 H2O = 2-amino-5-formylamino-6-(5-phospho-D-ribosylamino)pyrimidin-4(3H)-one + 2 phosphate + 2 H(+). Its function is as follows. Catalyzes the formation of 2-amino-5-formylamino-6-ribofuranosylamino-4(3H)-pyrimidinone ribonucleotide monophosphate and inorganic phosphate from GTP. Also has an independent pyrophosphate phosphohydrolase activity. This is GTP cyclohydrolase III from Methanosphaera stadtmanae (strain ATCC 43021 / DSM 3091 / JCM 11832 / MCB-3).